The primary structure comprises 524 residues: Bifunctional purine biosynthesis protein PurH (524 aa).

In terms of domain architecture, MGS-like spans 1–149; it reads MSDPVIKRAL…KNNESVTVVT (149 aa).

The protein belongs to the PurH family.

The enzyme catalyses (6R)-10-formyltetrahydrofolate + 5-amino-1-(5-phospho-beta-D-ribosyl)imidazole-4-carboxamide = 5-formamido-1-(5-phospho-D-ribosyl)imidazole-4-carboxamide + (6S)-5,6,7,8-tetrahydrofolate. It catalyses the reaction IMP + H2O = 5-formamido-1-(5-phospho-D-ribosyl)imidazole-4-carboxamide. The protein operates within purine metabolism; IMP biosynthesis via de novo pathway; 5-formamido-1-(5-phospho-D-ribosyl)imidazole-4-carboxamide from 5-amino-1-(5-phospho-D-ribosyl)imidazole-4-carboxamide (10-formyl THF route): step 1/1. Its pathway is purine metabolism; IMP biosynthesis via de novo pathway; IMP from 5-formamido-1-(5-phospho-D-ribosyl)imidazole-4-carboxamide: step 1/1. This chain is Bifunctional purine biosynthesis protein PurH, found in Chlorobium chlorochromatii (strain CaD3).